The following is a 342-amino-acid chain: Sorting nexin-15 (342 aa).

A PX domain is found at 1 to 130; sequence MSRQAKDDFL…EFFRGGEVTR (130 aa). Residues Arg-51, Ser-53, Arg-87, and Arg-96 each contribute to the a 1,2-diacyl-sn-glycero-3-phospho-(1D-myo-inositol-3-phosphate) site. Arg-105 carries the post-translational modification Omega-N-methylarginine. 2 positions are modified to phosphoserine: Ser-201 and Ser-227. Positions 245 to 267 are disordered; it reads DQEPWEPGGQEEEEDGEGGPTPA. The MIT domain occupies 265-342; that stretch reads TPAYLSQATE…LRLHLSQLPP (78 aa).

This sequence belongs to the sorting nexin family. As to quaternary structure, homodimer. Interacts with SNX1, SNX2 and SNX4. Widely expressed.

It is found in the cytoplasm. The protein localises to the membrane. It localises to the cytoplasmic vesicle membrane. In terms of biological role, may be involved in several stages of intracellular trafficking. Overexpression of SNX15 disrupts the normal trafficking of proteins from the plasma membrane to recycling endosomes or the TGN. The sequence is that of Sorting nexin-15 (SNX15) from Homo sapiens (Human).